We begin with the raw amino-acid sequence, 3374 residues long: Abnormal spindle-like microcephaly-associated protein homolog (3374 aa).

Residues S212, S215, S300, and S325 each carry the phosphoserine modification. The segment at 492 to 518 (SSKNIVTPPCKAASVARKRKSKGHTGD) is disordered. A Phosphoserine modification is found at S540. One can recognise a Calponin-homology (CH) 1 domain in the interval 855–991 (KASXDILLAF…LLWKIALAFQ (137 aa)). Positions 992-1013 (VDISLNLDQLKEEIDFLKKTQS) form a coiled coil. Residue S1038 is modified to Phosphoserine. One can recognise a Calponin-homology (CH) 2 domain in the interval 1045–1196 (SESVKLLMDW…YLSFLCARLL (152 aa)). 41 consecutive IQ domains span residues 1201–1230 (ETRA…RDKA), 1282–1313 (HSKS…IILQ), 1472–1503 (KRAA…VLQS), 1567–1596 (TRSA…AVVK), 1590–1619 (ILTA…ATVK), 1613–1642 (LKKA…IAQQ), 1647–1678 (LRAS…VLLQ), 1720–1749 (VRRA…AALK), 1743–1772 (QSAA…SALK), 1793–1822 (TRTA…AAVK), 1816–1847 (EHEA…SVIQ), 1866–1897 (LRRA…IIIQ), 1939–1968 (TKGA…AATT), 1962–1993 (MHQA…VIIQ), 2012–2043 (VKKA…TLIK), 2035–2066 (MHMA…IVIQ), 2085–2116 (TLKA…TLIQ), 2108–2137 (MRTA…VTKT), 2158–2189 (LRRS…AVIQ), 2181–2212 (MHSA…VWVQ), 2230–2261 (LQKA…TVLQ), 2253–2284 (MRRA…QVIQ), 2303–2334 (QXRS…TLIQ), 2326–2357 (MHAS…VFVQ), 2376–2407 (LKKA…ALIQ), 2399–2430 (MHRA…VLIQ), 2449–2480 (WRHS…VIIQ), 2472–2503 (KHRA…KVIQ), 2542–2573 (QHQA…VFVQ), 2583–2612 (RTQA…AATR), 2606–2637 (MHLA…VVIQ), 2656–2685 (IQKS…EKMA), 2732–2763 (QRKA…QIQS), 2777–2806 (QKRA…AAVG), 2827–2856 (IRSS…STIK), 2850–2881 (LKDS…RIQA), 2872–2903 (EVKA…RIIQ), 2947–2976 (RHQA…AALT), 2997–3028 (LKKS…RLLH), 3099–3128 (HSRA…RIAK), and 3122–3153 (LNKR…IRQR).

It is found in the cytoplasm. The protein resides in the cytoskeleton. It localises to the spindle. The protein localises to the nucleus. Functionally, probable role in mitotic spindle regulation and coordination of mitotic processes. May have a preferential role in regulating neurogenesis. This is Abnormal spindle-like microcephaly-associated protein homolog (ASPM) from Ovis aries (Sheep).